We begin with the raw amino-acid sequence, 286 residues long: 4-diphosphocytidyl-2-C-methyl-D-erythritol kinase (286 aa).

Residue Lys-11 is part of the active site. Residue 94 to 104 (PMGGGIGGGSS) coordinates ATP. Asp-136 is an active-site residue.

It belongs to the GHMP kinase family. IspE subfamily.

The enzyme catalyses 4-CDP-2-C-methyl-D-erythritol + ATP = 4-CDP-2-C-methyl-D-erythritol 2-phosphate + ADP + H(+). It functions in the pathway isoprenoid biosynthesis; isopentenyl diphosphate biosynthesis via DXP pathway; isopentenyl diphosphate from 1-deoxy-D-xylulose 5-phosphate: step 3/6. Functionally, catalyzes the phosphorylation of the position 2 hydroxy group of 4-diphosphocytidyl-2C-methyl-D-erythritol. The protein is 4-diphosphocytidyl-2-C-methyl-D-erythritol kinase of Pseudomonas putida (strain W619).